The following is a 1024-amino-acid chain: MSYAELFCQSNFSFLTGASHAEELVLQAAFYRYHAIAITDECSVAGVVKAHATIEQHKLDIKQIVGSMFWLNEECQIVLLCPCRKAYAEMCRIITNARRRSEKGSYQLSEWDLMSIRHCLVLWLPTHQASDHYWGRWLNQHHNNRLWVAIQRHLGGDDDAYTNHCEKLAHELQQPITACGGVLMHTAERLPLQHILTAIKHGCSVDQLGFERLSNAERALRPLNKLVRIYKPEWLEESKYIADLCEFKLSDLKYEYPTELIPNGYTPNSYLRMLVEQGKERRFPEGVPEDINQTIENELRLIEDLKYHYYFLTIHDIVMFAKQQGILYQGRGSAANSVVCYCLEITAVDPRQISVLFERFISKERKEPPDIDVDFEHERREEVIQYIYKKYGRERAALAATVISYRFKSAVREVGKALGIEETQLDFFIKNVNRRDRSQGWQAQIIELGLQPESLKGQQFIQLVNEIIGFPRHLSQHVGGFVISSGPLYELVPVENAAMEDRTIIQWDKDDLESLELLKVDVLALGMLNAIRKCFQLIEKHHQRSLSIAEITRRQDDPHVYRMLQKADTVGVFQIESRAQMSMLPRLKPACYYDLVIQIAIVRPGPIQGDMVHPFLKRRNGEEPVSYPSEAVKSVLERTMGVPIFQEQVIKLAMVAAGFSGGEADQLRRAMASWKKNGDLAKFKPKLLNGMQERGYDLAFAERIFEQICGFGEYGFPESHSASFAVLAYCSAWLKYYYPAEFYTALLNSQPMGFYSPSQLVQDARRHGVEVLPICVNHSYYQHHLIQRPNGRLGVQLGFRLVKGFNEEGATRLVERRPKTGYHSIQEVKQILRSRRDIELLASANAFQILSGNRYNARWAAMDSLSDLPLFHHIEEPSVGYQVQPSEYESLIEDYASTGLSLNRHPITLLEEAGILPRFTRMKQLVDKEHKSLVTVAGVVTGRQSPGTAAGVTFFTLEDDTGNINVVVWSATARAQKQAYLTSKILMVKGILEREGEVIHVIAGKLIDCTHYLSNLQSKSRDFH.

The protein belongs to the DNA polymerase type-C family. DnaE2 subfamily.

It localises to the cytoplasm. It catalyses the reaction DNA(n) + a 2'-deoxyribonucleoside 5'-triphosphate = DNA(n+1) + diphosphate. Its function is as follows. DNA polymerase involved in damage-induced mutagenesis and translesion synthesis (TLS). It is not the major replicative DNA polymerase. The polypeptide is Error-prone DNA polymerase (Vibrio parahaemolyticus serotype O3:K6 (strain RIMD 2210633)).